The primary structure comprises 303 residues: Putative S-adenosyl-L-methionine-dependent methyltransferase Mb1931c (303 aa).

Residues D129 and 158 to 159 (DL) each bind S-adenosyl-L-methionine.

Belongs to the UPF0677 family.

Exhibits S-adenosyl-L-methionine-dependent methyltransferase activity. In Mycobacterium bovis (strain ATCC BAA-935 / AF2122/97), this protein is Putative S-adenosyl-L-methionine-dependent methyltransferase Mb1931c.